The following is a 359-amino-acid chain: MILNSSTEDGIKRIQDDCPKAGRHNYIFIMIPTLYSIIFVVGIFGNSLVVIVIYFYMKLKTVASVFLLNLALADLCFLLTLPLWAVYTAMEYRWPFGNYLCKIASASVSFNLYASVFLLTCLSIDRYLAIVHPMKSRLRRTMLVAKVTCIIIWLLAGLASLPTIIHRNVFFIENTNITVCAFHYESQNSTLPVGLGLTKNILGFLFPFLIILTSYTLIWKTLKKAYEIQKNKPRKDDIFKIILAIVLFFFFSWVPHQIFTFMDVLIQLGLIRDCKIEDIVDTAMPITICLAYFNNCLNPLFYGFLGKKFKKYFLQLLKYIPPKAKSHSNLSTKMSTLSYRPSENGNSSTKKPAPCIEVE.

Residues 1–25 (MILNSSTEDGIKRIQDDCPKAGRHN) are Extracellular-facing. Asn-4 is a glycosylation site (N-linked (GlcNAc...) asparagine). The angiotensin II site is built by Gln-15 and Asp-17. 2 disulfides stabilise this stretch: Cys-18–Cys-274 and Cys-101–Cys-180. A helical membrane pass occupies residues 26–55 (YIFIMIPTLYSIIFVVGIFGNSLVVIVIYF). At 56–61 (YMKLKT) the chain is on the cytoplasmic side. Residues 62 to 89 (VASVFLLNLALADLCFLLTLPLWAVYTA) form a helical membrane-spanning segment. The Extracellular segment spans residues 90–98 (MEYRWPFGN). A helical membrane pass occupies residues 99–125 (YLCKIASASVSFNLYASVFLLTCLSID). At 126-141 (RYLAIVHPMKSRLRRT) the chain is on the cytoplasmic side. Residues 142–165 (MLVAKVTCIIIWLLAGLASLPTII) form a helical membrane-spanning segment. The Extracellular portion of the chain corresponds to 166–190 (HRNVFFIENTNITVCAFHYESQNST). Arg-167 contacts angiotensin II. N-linked (GlcNAc...) asparagine glycosylation occurs at Asn-176. Residues Phe-182, His-183, and Tyr-184 each coordinate angiotensin II. N-linked (GlcNAc...) asparagine glycosylation is present at Asn-188. The chain crosses the membrane as a helical span at residues 191–216 (LPVGLGLTKNILGFLFPFLIILTSYT). Lys-199 contacts angiotensin II. The Cytoplasmic portion of the chain corresponds to 217–239 (LIWKTLKKAYEIQKNKPRKDDIF). A helical transmembrane segment spans residues 240-268 (KIILAIVLFFFFSWVPHQIFTFMDVLIQL). The Extracellular portion of the chain corresponds to 269–278 (GLIRDCKIED). A helical transmembrane segment spans residues 279–304 (IVDTAMPITICLAYFNNCLNPLFYGF). Residues 305-359 (LGKKFKKYFLQLLKYIPPKAKSHSNLSTKMSTLSYRPSENGNSSTKKPAPCIEVE) lie on the Cytoplasmic side of the membrane. Residues 336–350 (TLSYRPSENGNSSTK) are compositionally biased toward polar residues. Residues 336–359 (TLSYRPSENGNSSTKKPAPCIEVE) are disordered. Cys-355 carries S-palmitoyl cysteine lipidation.

Belongs to the G-protein coupled receptor 1 family. Interacts with MAS1. Interacts with ARRB1. Interacts with FLNA (via filamin repeat 21); increases PKA-mediated phosphorylation of FLNA. In terms of processing, C-terminal Ser or Thr residues may be phosphorylated. Adrenal medulla, cortex and kidney.

Its subcellular location is the cell membrane. Its function is as follows. Receptor for angiotensin II, a vasoconstricting peptide, which acts as a key regulator of blood pressure and sodium retention by the kidney. The activated receptor in turn couples to G-alpha proteins G(q) (GNAQ, GNA11, GNA14 or GNA15) and thus activates phospholipase C and increases the cytosolic Ca(2+) concentrations, which in turn triggers cellular responses such as stimulation of protein kinase C. This Bos taurus (Bovine) protein is Type-1 angiotensin II receptor (AGTR1).